A 512-amino-acid polypeptide reads, in one-letter code: tRNA-2-methylthio-N(6)-dimethylallyladenosine synthase (512 aa).

The interval 1 to 22 is disordered; sequence MVAHDAAAGVTGEGAGPPVRRA. The MTTase N-terminal domain occupies 25–141; it reads RTYQVRTYGC…LPTLLERARH (117 aa). 6 residues coordinate [4Fe-4S] cluster: Cys34, Cys70, Cys104, Cys178, Cys182, and Cys185. The 237-residue stretch at 164–400 folds into the Radical SAM core domain; the sequence is RESAYAAWVS…IALQEQISLE (237 aa). The TRAM domain maps to 403-471; it reads RALVGQAVEV…PHHLIADAGV (69 aa).

Belongs to the methylthiotransferase family. MiaB subfamily. In terms of assembly, monomer. [4Fe-4S] cluster serves as cofactor.

It is found in the cytoplasm. The catalysed reaction is N(6)-dimethylallyladenosine(37) in tRNA + (sulfur carrier)-SH + AH2 + 2 S-adenosyl-L-methionine = 2-methylsulfanyl-N(6)-dimethylallyladenosine(37) in tRNA + (sulfur carrier)-H + 5'-deoxyadenosine + L-methionine + A + S-adenosyl-L-homocysteine + 2 H(+). Functionally, catalyzes the methylthiolation of N6-(dimethylallyl)adenosine (i(6)A), leading to the formation of 2-methylthio-N6-(dimethylallyl)adenosine (ms(2)i(6)A) at position 37 in tRNAs that read codons beginning with uridine. The chain is tRNA-2-methylthio-N(6)-dimethylallyladenosine synthase from Mycobacterium bovis (strain ATCC BAA-935 / AF2122/97).